Here is a 386-residue protein sequence, read N- to C-terminus: Protein phosphatase methylesterase 1 (386 aa).

The interval Met1–Lys38 is disordered. The residue at position 15 (Ser15) is a Phosphoserine. An Asymmetric dimethylarginine; alternate modification is found at Arg16. An Omega-N-methylarginine; alternate modification is found at Arg16. Ser42 carries the post-translational modification Phosphoserine. Residues Ser156 and Asp181 contribute to the active site. Acidic residues predominate over residues Ile254–Ser265. Positions Ile254 to Lys280 are disordered. Basic and acidic residues predominate over residues Ile268–Lys280. His349 is an active-site residue.

It belongs to the AB hydrolase superfamily. Binds PPP2CA and PPP2CB. Phosphorylated by SIK1 following increases in intracellular sodium, leading to dissociation from the protein phosphatase 2A (PP2A) complex and subsequent dephosphorylation of sodium/potassium-transporting ATPase ATP1A1.

The catalysed reaction is [phosphatase 2A protein]-C-terminal L-leucine methyl ester + H2O = [phosphatase 2A protein]-C-terminal L-leucine + methanol + H(+). Demethylates proteins that have been reversibly carboxymethylated. Demethylates PPP2CB (in vitro) and PPP2CA. Binding to PPP2CA displaces the manganese ion and inactivates the enzyme. This Homo sapiens (Human) protein is Protein phosphatase methylesterase 1 (PPME1).